The following is a 536-amino-acid chain: Mitogen-activated protein kinase kinase kinase mom-4 (536 aa).

Residues 1-20 (MDNSSQSKPSSSSSSHSPSP) are compositionally biased toward low complexity. A disordered region spans residues 1 to 34 (MDNSSQSKPSSSSSSHSPSPAAITPTQRTTRDSG). Residues 51–305 (NLNSHYLGKG…SSECVEYFTL (255 aa)) enclose the Protein kinase domain. ATP is bound by residues 57-65 (LGKGTYGLV) and lysine 84. The Proton acceptor role is filled by aspartate 176. Positions 314–438 (SVPLSDSSTN…EHRRDSNDEE (125 aa)) are disordered. Polar residues-rich tracts occupy residues 315–325 (VPLSDSSTNGP) and 350–366 (NNRTPTASKLLNPQQPG). The segment covering 405–438 (KNFRDRAKSEQRQPHRDARPPPPFEHRRDSNDEE) has biased composition (basic and acidic residues).

It belongs to the protein kinase superfamily. STE Ser/Thr protein kinase family. MAP kinase kinase kinase subfamily. In terms of assembly, interacts with, and is activated by, tap-1. Mg(2+) serves as cofactor. Post-translationally, may be autophosphorylated.

The enzyme catalyses L-seryl-[protein] + ATP = O-phospho-L-seryl-[protein] + ADP + H(+). The catalysed reaction is L-threonyl-[protein] + ATP = O-phospho-L-threonyl-[protein] + ADP + H(+). Its function is as follows. Part of the Wnt signaling pathway essential for the specification of the mesodermal cell fate in early embryos. Stimulates the wrm-1/lit-1-dependent phosphorylation of pop-1 and plays a role in the initial nuclear accumulation of wrm-1. The sequence is that of Mitogen-activated protein kinase kinase kinase mom-4 from Caenorhabditis elegans.